The following is a 266-amino-acid chain: Protein phosphatase 1 regulatory subunit 35 (266 aa).

Positions 1-10 are enriched in polar residues; sequence MMVYNGSQLE. The disordered stretch occupies residues 1–118; that stretch reads MMVYNGSQLE…QDLGTPVQQS (118 aa). Residues 21 to 38 are compositionally biased toward pro residues; sequence PGPPPEPRAPEPGAPVPE. Phosphoserine occurs at positions 46 and 51. The span at 62–79 shows a compositional bias: basic residues; it reads GRRKGRADRRGGARKGRQ. The span at 86–97 shows a compositional bias: pro residues; that stretch reads PPSPVRSGPPPA.

It belongs to the PPP1R35 family. Interacts with PPP1CA; this interaction mediates the PPP1CA phosphatase activity inhibition. Interacts with RTTN; this interaction allows the mutual recruitment to the centriole.

Its subcellular location is the cytoplasm. The protein resides in the cytoskeleton. It is found in the microtubule organizing center. It localises to the centrosome. The protein localises to the centriole. Functionally, during centriole duplication, plays a role in the centriole elongation by promoting the recruitment of the microtubule-binding elongation machinery through its interaction with RTTN, leading to the centriole to centrosome conversion. In addition may play a role in the primary cilia assembly. This chain is Protein phosphatase 1 regulatory subunit 35, found in Bos taurus (Bovine).